Reading from the N-terminus, the 120-residue chain is Ribosome-binding factor A (120 aa).

It belongs to the RbfA family. As to quaternary structure, monomer. Binds 30S ribosomal subunits, but not 50S ribosomal subunits or 70S ribosomes.

It localises to the cytoplasm. Its function is as follows. One of several proteins that assist in the late maturation steps of the functional core of the 30S ribosomal subunit. Associates with free 30S ribosomal subunits (but not with 30S subunits that are part of 70S ribosomes or polysomes). Required for efficient processing of 16S rRNA. May interact with the 5'-terminal helix region of 16S rRNA. The sequence is that of Ribosome-binding factor A from Campylobacter jejuni subsp. jejuni serotype O:6 (strain 81116 / NCTC 11828).